Reading from the N-terminus, the 369-residue chain is Leucine-specific-binding protein (369 aa).

Positions 1–23 (MKRKAKTIIAGIVALAVSQGAMA) are cleaved as a signal peptide. An intrachain disulfide couples cysteine 76 to cysteine 101.

Belongs to the leucine-binding protein family.

The protein localises to the periplasm. In terms of biological role, this protein is a component of the leucine-specific transport system, which is one of the two periplasmic binding protein-dependent transport systems of the high-affinity transport of the branched-chain amino acids. The chain is Leucine-specific-binding protein (livK) from Salmonella typhi.